Consider the following 279-residue polypeptide: Probable endonuclease 4 (279 aa).

Zn(2+)-binding residues include histidine 66, histidine 106, glutamate 142, aspartate 175, histidine 178, histidine 212, aspartate 225, histidine 227, and glutamate 257.

It belongs to the AP endonuclease 2 family. The cofactor is Zn(2+).

It carries out the reaction Endonucleolytic cleavage to 5'-phosphooligonucleotide end-products.. Functionally, endonuclease IV plays a role in DNA repair. It cleaves phosphodiester bonds at apurinic or apyrimidinic (AP) sites, generating a 3'-hydroxyl group and a 5'-terminal sugar phosphate. The sequence is that of Probable endonuclease 4 from Moorella thermoacetica (strain ATCC 39073 / JCM 9320).